We begin with the raw amino-acid sequence, 237 residues long: MIVIPAIDLIDGKCVRLTQGDYSQVQLFNSDPIEQAKLFEKSGAKYVHVVDLDGAKVGRPVNFEVIRNIKRVTSLTVECGGGIRDKATVELYISSGVNYIILGSVIFKNPDFVNEVMKVFGKERFIASLDFKDGFVKLSGWQEATTITIEEGIMKIKTLGFERLIYTDITTDGMLKGHNFEAAKYIRELFDGFLTASGGISTKEDIMRLKSIGVDAAVVGKALYTGQLKLEEVINLL.

Asp8 acts as the Proton acceptor in catalysis. The active-site Proton donor is Asp130.

It belongs to the HisA/HisF family.

It localises to the cytoplasm. It carries out the reaction 1-(5-phospho-beta-D-ribosyl)-5-[(5-phospho-beta-D-ribosylamino)methylideneamino]imidazole-4-carboxamide = 5-[(5-phospho-1-deoxy-D-ribulos-1-ylimino)methylamino]-1-(5-phospho-beta-D-ribosyl)imidazole-4-carboxamide. Its pathway is amino-acid biosynthesis; L-histidine biosynthesis; L-histidine from 5-phospho-alpha-D-ribose 1-diphosphate: step 4/9. The sequence is that of 1-(5-phosphoribosyl)-5-[(5-phosphoribosylamino)methylideneamino] imidazole-4-carboxamide isomerase from Caldicellulosiruptor bescii (strain ATCC BAA-1888 / DSM 6725 / KCTC 15123 / Z-1320) (Anaerocellum thermophilum).